The primary structure comprises 1420 residues: DNA-directed RNA polymerase subunit beta' (1420 aa).

Residues Cys70, Cys72, Cys85, and Cys88 each contribute to the Zn(2+) site. 3 residues coordinate Mg(2+): Asp464, Asp466, and Asp468. Zn(2+) is bound by residues Cys823, Cys897, Cys904, and Cys907.

The protein belongs to the RNA polymerase beta' chain family. The RNAP catalytic core consists of 2 alpha, 1 beta, 1 beta' and 1 omega subunit. When a sigma factor is associated with the core the holoenzyme is formed, which can initiate transcription. The cofactor is Mg(2+). Zn(2+) serves as cofactor.

It catalyses the reaction RNA(n) + a ribonucleoside 5'-triphosphate = RNA(n+1) + diphosphate. In terms of biological role, DNA-dependent RNA polymerase catalyzes the transcription of DNA into RNA using the four ribonucleoside triphosphates as substrates. The chain is DNA-directed RNA polymerase subunit beta' from Polynucleobacter asymbioticus (strain DSM 18221 / CIP 109841 / QLW-P1DMWA-1) (Polynucleobacter necessarius subsp. asymbioticus).